The primary structure comprises 498 residues: Cysteine--tRNA ligase (498 aa).

Cys-44 contributes to the Zn(2+) binding site. Positions 46–56 (PTVYSDAHLGH) match the 'HIGH' region motif. Zn(2+)-binding residues include Cys-235, His-260, and Glu-264. Positions 291-295 (KMSKS) match the 'KMSKS' region motif. Lys-294 provides a ligand contact to ATP.

This sequence belongs to the class-I aminoacyl-tRNA synthetase family. As to quaternary structure, monomer. Requires Zn(2+) as cofactor.

The protein resides in the cytoplasm. The catalysed reaction is tRNA(Cys) + L-cysteine + ATP = L-cysteinyl-tRNA(Cys) + AMP + diphosphate. The protein is Cysteine--tRNA ligase (cysS) of Deinococcus radiodurans (strain ATCC 13939 / DSM 20539 / JCM 16871 / CCUG 27074 / LMG 4051 / NBRC 15346 / NCIMB 9279 / VKM B-1422 / R1).